A 257-amino-acid chain; its full sequence is Acetylglutamate kinase (257 aa).

Substrate is bound by residues 43–44 (GG), arginine 65, and asparagine 157. Residues 180–185 (DVSGIL) and 208–210 (IIT) each bind ATP.

The protein belongs to the acetylglutamate kinase family. ArgB subfamily. In terms of assembly, homodimer.

It localises to the cytoplasm. The catalysed reaction is N-acetyl-L-glutamate + ATP = N-acetyl-L-glutamyl 5-phosphate + ADP. Its pathway is amino-acid biosynthesis; L-arginine biosynthesis; N(2)-acetyl-L-ornithine from L-glutamate: step 2/4. Functionally, catalyzes the ATP-dependent phosphorylation of N-acetyl-L-glutamate. The polypeptide is Acetylglutamate kinase (Salmonella paratyphi B (strain ATCC BAA-1250 / SPB7)).